Consider the following 225-residue polypeptide: Ribosomal RNA large subunit methyltransferase E (225 aa).

S-adenosyl-L-methionine-binding residues include glycine 64, tryptophan 66, aspartate 93, aspartate 109, and aspartate 138. Lysine 178 serves as the catalytic Proton acceptor.

Belongs to the class I-like SAM-binding methyltransferase superfamily. RNA methyltransferase RlmE family.

The protein resides in the cytoplasm. It catalyses the reaction uridine(2552) in 23S rRNA + S-adenosyl-L-methionine = 2'-O-methyluridine(2552) in 23S rRNA + S-adenosyl-L-homocysteine + H(+). Specifically methylates the uridine in position 2552 of 23S rRNA at the 2'-O position of the ribose in the fully assembled 50S ribosomal subunit. The chain is Ribosomal RNA large subunit methyltransferase E from Cupriavidus pinatubonensis (strain JMP 134 / LMG 1197) (Cupriavidus necator (strain JMP 134)).